The primary structure comprises 506 residues: Aminoaldehyde dehydrogenase 1b (506 aa).

Na(+) is bound at residue Asp-102. Residues 162–164 and 188–191 each bind NAD(+); these read TPW and KPSE. Leu-192 is a binding site for Na(+). NAD(+) is bound by residues 242 to 245 and Glu-263; that span reads SFET. The active-site Proton acceptor is Glu-263. Cys-297 acts as the Nucleophile in catalysis. The NAD(+) site is built by Glu-396 and Trp-462.

It belongs to the aldehyde dehydrogenase family.

It catalyses the reaction 4-aminobutanal + NAD(+) + H2O = 4-aminobutanoate + NADH + 2 H(+). The catalysed reaction is 3-aminopropanal + NAD(+) + H2O = beta-alanine + NADH + 2 H(+). The enzyme catalyses 4-(trimethylamino)butanal + NAD(+) + H2O = 4-(trimethylamino)butanoate + NADH + 2 H(+). It carries out the reaction 4-guanidinobutanal + NAD(+) + H2O = 4-guanidinobutanoate + NADH + 2 H(+). It catalyses the reaction betaine aldehyde + NAD(+) + H2O = glycine betaine + NADH + 2 H(+). It participates in amine and polyamine biosynthesis; betaine biosynthesis via choline pathway; betaine from betaine aldehyde: step 1/1. Dehydrogenase that catalyzes the oxidation of several aminoaldehydes. Metabolizes and detoxifies aldehyde products of polyamine degradation to non-toxic amino acids. Catalyzes the oxidation of 4-aminobutanal and 3-aminopropanal to 4-aminobutanoate and beta-alanine, respectively. Catalyzes the oxidation of 4-(trimethylamino)butanal and 4-guanidinobutanal to 4-trimethylammoniobutanoate and 4-guanidinobutanoate, respectively. Catalyzes the oxidation of betaine aldehyde to glycine betaine. This chain is Aminoaldehyde dehydrogenase 1b, found in Zea mays (Maize).